Reading from the N-terminus, the 199-residue chain is Replication protein (199 aa).

This sequence belongs to the Gram-positive plasmids replication protein type 2 family.

Its function is as follows. Is essential for plasmid replication. Nicks the positive strand at the plus origin of replication. This Staphylococcus aureus protein is Replication protein (repF).